The chain runs to 198 residues: Nucleoid occlusion factor SlmA (198 aa).

One can recognise an HTH tetR-type domain in the interval 9-70; that stretch reads RNRREEILQA…SLIEFIEDSL (62 aa). A DNA-binding region (H-T-H motif) is located at residues 33-52; that stretch reads TTAKLAANVGVSEAALYRHF. The stretch at 119 to 144 forms a coiled coil; that stretch reads DRLQGRINQLFERIEVQLRQVLREKK.

The protein belongs to the nucleoid occlusion factor SlmA family. Homodimer. Interacts with FtsZ.

It localises to the cytoplasm. Its subcellular location is the nucleoid. In terms of biological role, required for nucleoid occlusion (NO) phenomenon, which prevents Z-ring formation and cell division over the nucleoid. Acts as a DNA-associated cell division inhibitor that binds simultaneously chromosomal DNA and FtsZ, and disrupts the assembly of FtsZ polymers. SlmA-DNA-binding sequences (SBS) are dispersed on non-Ter regions of the chromosome, preventing FtsZ polymerization at these regions. The protein is Nucleoid occlusion factor SlmA of Yersinia enterocolitica serotype O:8 / biotype 1B (strain NCTC 13174 / 8081).